The sequence spans 739 residues: Eukaryotic translation initiation factor 3 subunit B (739 aa).

The tract at residues 1-98 is sufficient for interaction with HCR1 and TIF32; sequence MSINEEDYLQ…LFIQFKSTES (98 aa). Positions 1–224 are sufficient for interaction with PIC8; that stretch reads MSINEEDYLQ…GIQSWGGANF (224 aa). An RRM domain is found at 37-124; sequence NYIIVDGAPI…HRLLVNKLSD (88 aa). WD repeat units lie at residues 190–229, 231–293, 301–339, 343–385, 453–502, 537–579, and 592–630; these read PRKGFTSKYAKFSPKGTYLFSIHPQGIQSWGGANFNSIKR, FHQQ…RTFA, QKEMPWPLVKWSYDDKYCARQGPDALAIYETESNFQLLD, VKVD…QTAR, ELKD…KGGV, IENK…ETNK, and DKFSGMTNISWDPSGRFVAAWSTSWLHAIENGYRLYEFT.

It belongs to the eIF-3 subunit B family. In terms of assembly, component of the eukaryotic translation initiation factor 3 (eIF-3) complex.

The protein resides in the cytoplasm. Functionally, RNA-binding component of the eukaryotic translation initiation factor 3 (eIF-3) complex, which is involved in protein synthesis of a specialized repertoire of mRNAs and, together with other initiation factors, stimulates binding of mRNA and methionyl-tRNAi to the 40S ribosome. The eIF-3 complex specifically targets and initiates translation of a subset of mRNAs involved in cell proliferation. The polypeptide is Eukaryotic translation initiation factor 3 subunit B (Candida albicans (strain SC5314 / ATCC MYA-2876) (Yeast)).